We begin with the raw amino-acid sequence, 396 residues long: Phosphoglycerate kinase (396 aa).

Substrate-binding positions include 21–23 (DFN), R36, 59–62 (HLGK), R119, and R156. Residues K206, E325, and 352–355 (GGDS) each bind ATP.

It belongs to the phosphoglycerate kinase family. As to quaternary structure, monomer.

It is found in the cytoplasm. It catalyses the reaction (2R)-3-phosphoglycerate + ATP = (2R)-3-phospho-glyceroyl phosphate + ADP. It functions in the pathway carbohydrate degradation; glycolysis; pyruvate from D-glyceraldehyde 3-phosphate: step 2/5. This Macrococcus caseolyticus (strain JCSC5402) (Macrococcoides caseolyticum) protein is Phosphoglycerate kinase.